A 336-amino-acid chain; its full sequence is DNA-directed RNA polymerase subunit alpha (336 aa).

Positions 1 to 232 (MIQKNWQELI…DQLSVFVNFD (232 aa)) are alpha N-terminal domain (alpha-NTD). Residues 248 to 336 (FNPALLKKVD…DLAKRYEDQY (89 aa)) are alpha C-terminal domain (alpha-CTD).

The protein belongs to the RNA polymerase alpha chain family. In terms of assembly, homodimer. The RNAP catalytic core consists of 2 alpha, 1 beta, 1 beta' and 1 omega subunit. When a sigma factor is associated with the core the holoenzyme is formed, which can initiate transcription.

It catalyses the reaction RNA(n) + a ribonucleoside 5'-triphosphate = RNA(n+1) + diphosphate. Functionally, DNA-dependent RNA polymerase catalyzes the transcription of DNA into RNA using the four ribonucleoside triphosphates as substrates. This is DNA-directed RNA polymerase subunit alpha from Sinorhizobium medicae (strain WSM419) (Ensifer medicae).